The primary structure comprises 362 residues: G-prodeshotein coupled receptor 4 (362 aa).

Residues 1-8 (MGNHTWEG) lie on the Extracellular side of the membrane. N-linked (GlcNAc...) asparagine glycosylation occurs at Asn3. A helical transmembrane segment spans residues 9–45 (CHVDSRVDHLFPPSLYIFVIGVGLPTNCLALWAAYRQ). Disulfide bonds link Cys9/Cys258 and Cys90/Cys168. Residues 46–49 (VQQR) are Cytoplasmic-facing. A helical membrane pass occupies residues 50–80 (NELGVYLMNLSIADLLYICTLPLWVDYFLHH). Residues 81-85 (DNWIH) lie on the Extracellular side of the membrane. Residues 86-121 (GPGSCKLFGFIFYTNIYISIAFLCCISVDRYLAVAH) traverse the membrane as a helical segment. At 122 to 129 (PLRFARLR) the chain is on the cytoplasmic side. A helical membrane pass occupies residues 130 to 156 (RVKTAVAVSSVVWATELGANSAPLFHD). Residues 157–172 (ELFRDRYNHTFCFEKF) lie on the Extracellular side of the membrane. Positions 157-172 (ELFRDRYNHTFCFEKF) are extracellular loop 2 (ECL2). A glycan (N-linked (GlcNAc...) asparagine) is linked at Asn164. The chain crosses the membrane as a helical span at residues 173–210 (PMEGWVAWMNLYRVFVGFLFPWALMLLSYRGILRAVRG). Over 211-214 (SVST) the chain is Cytoplasmic. The chain crosses the membrane as a helical span at residues 215–250 (ERQEKAKIKRLALSLIAIVLVCFAPYHVLLLSRSAI). Over 251 to 260 (YLGRPWDCGF) the chain is Extracellular. A helical membrane pass occupies residues 261–289 (EERVFSAYHSSLAFTSLNCVADPILYCLV). The Cytoplasmic portion of the chain corresponds to 290–362 (NEGARSDVAK…VQLKMLPPAQ (73 aa)). A disordered region spans residues 335–362 (AKAMTGSWAATPPSQGDQVQLKMLPPAQ).

This sequence belongs to the G-protein coupled receptor 1 family.

It localises to the cell membrane. Its activity is regulated as follows. Activated by a network of residues that connects an extracellular-facing cavity to Glu-145, a conserved charged residue buried in the transmembrane core of the receptor. Protonation likely drives conformational changes in extracellular loop 2 (ECL2), which stabilizes movement of transmembrane 3 (TM3) and a series of rearrangements that connect the extracellular-facing cavity to Glu-145, a residue only conserved in proton-sensing G-protein coupled receptors. Functionally, proton-sensing G-protein coupled receptor activated by extracellular pH, which is required to monitor pH changes and generate adaptive reactions. Activated by an optimal pH of 6.8-7.2. Ligand binding causes a conformation change that triggers signaling via guanine nucleotide-binding proteins (G proteins) and modulates the activity of downstream effectors, such as adenylate cyclase. GPR4 is mainly coupled to G(s) G proteins and mediates activation of adenylate cyclase activity. May also couple with G(q) and G(12)/G(13) G proteins. Acts as a key regulator of respiratory sensitivity to CO2/H(+) in brain retrotrapezoid nucleus neurons: acts by mediating detection of protons generated by the formation of carbonic acid in the blood, an important mechanism to impulse to breathe. Also acts as a regulator of acid secretion in the kidney collecting duct by maintaining acid-base homeostasis in the kidney. Acidosis-induced GPR4 activation increases paracellular gap formation and permeability of vascular endothelial cells, possibly through the G(12)/G(13)/Rho GTPase signaling pathway. The polypeptide is G-prodeshotein coupled receptor 4 (Homo sapiens (Human)).